Consider the following 291-residue polypeptide: uncharacterized protein (291 aa).

Transmembrane regions (helical) follow at residues 5–23 (ILLSLSASVLFGYLYYFST), 33–52 (IFGFRIIFTLPFVIAAVFLF), 69–91 (PLLIFGFLFNSAMMGIQIWLFLW), 101–120 (VSFGYLLLPLTMVLVGRLVF), 127–144 (VKFLAVVIAAIGVFSNIL), 148–165 (GLSWEALLVSFGYSTYFA), 172–194 (INDLAGFCLEMSLLLPVCIYFAW), 209–228 (LLLLVLLGLISGVALNTYIV), 235–257 (INVLGLLGYAEPIMMLFVSFLIG), and 262–284 (SETIPLFICLMISMILFMSEGLV).

The protein belongs to the EamA transporter family.

It is found in the cell membrane. This is an uncharacterized protein from Pasteurella multocida (strain Pm70).